Reading from the N-terminus, the 396-residue chain is ATP-dependent RNA helicase eIF4A (396 aa).

A Q motif motif is present at residues 22–50 (YSFDDLNLKPNIVRGIFGYGYESPSAIQQ). Residues 53 to 223 (ILPITEGRDV…TKFMNNPVRI (171 aa)) form the Helicase ATP-binding domain. 66–73 (AQSGTGKT) contributes to the ATP binding site. The DEAD box signature appears at 171–174 (DEAD). The 162-residue stretch at 234-395 (GIKQFYINVE…EMPANIGELF (162 aa)) folds into the Helicase C-terminal domain.

Belongs to the DEAD box helicase family. eIF4A subfamily. Component of the eIF4F complex, which composition varies with external and internal environmental conditions. It is composed of at least eIF4A, eIF4E and eIF4G.

It is found in the cytoplasm. It carries out the reaction ATP + H2O = ADP + phosphate + H(+). ATP-dependent RNA helicase which is a subunit of the eIF4F complex involved in cap recognition and is required for mRNA binding to ribosome. In the current model of translation initiation, eIF4A unwinds RNA secondary structures in the 5'-UTR of mRNAs which is necessary to allow efficient binding of the small ribosomal subunit, and subsequent scanning for the initiator codon. The chain is ATP-dependent RNA helicase eIF4A (TIF1) from Meyerozyma guilliermondii (strain ATCC 6260 / CBS 566 / DSM 6381 / JCM 1539 / NBRC 10279 / NRRL Y-324) (Yeast).